The primary structure comprises 316 residues: Malate dehydrogenase (316 aa).

Residues 12-17 (GAGNIG) and D36 contribute to the NAD(+) site. Substrate-binding residues include R85 and R91. Residues N98 and 121–123 (VTN) contribute to the NAD(+) site. Residues N123 and R154 each contribute to the substrate site. The active-site Proton acceptor is the H178.

This sequence belongs to the LDH/MDH superfamily. MDH type 3 family.

The catalysed reaction is (S)-malate + NAD(+) = oxaloacetate + NADH + H(+). Its function is as follows. Catalyzes the reversible oxidation of malate to oxaloacetate. The sequence is that of Malate dehydrogenase from Wolbachia pipientis wMel.